Consider the following 368-residue polypeptide: Cyanide hydratase (368 aa).

The region spanning 6–285 (YKAAVVTSEP…DGLMYVDIDL (280 aa)) is the CN hydrolase domain. Glutamate 46 functions as the Proton acceptor in the catalytic mechanism. Lysine 128 is an active-site residue. The active-site Nucleophile is the cysteine 163. The tract at residues 341–368 (LDRPLEEEDYRQGTDAGETEKASSNGHA) is disordered.

Belongs to the carbon-nitrogen hydrolase superfamily. Nitrilase family. In terms of assembly, oligomer of dimers, forming left-handed helical fibers.

The catalysed reaction is formamide = hydrogen cyanide + H2O. Catalyzes the hydration of cyanide to formamide. Degradation of cyanide may be important for plant pathogenic fungi in infection of cyanogenic plants. The polypeptide is Cyanide hydratase (Microdochium sorghi (Zonate leaf spot disease fungus)).